The following is a 79-amino-acid chain: Putative antitoxin MM_2475 (79 aa).

The protein belongs to the UPF0330 family.

Functionally, possibly the antitoxin component of a type II toxin-antitoxin (TA) system. This Methanosarcina mazei (strain ATCC BAA-159 / DSM 3647 / Goe1 / Go1 / JCM 11833 / OCM 88) (Methanosarcina frisia) protein is Putative antitoxin MM_2475.